The sequence spans 435 residues: Trigger factor (435 aa).

The region spanning 161 to 246 (GDKLTLDFTG…IHKTEGPILP (86 aa)) is the PPIase FKBP-type domain.

The protein belongs to the FKBP-type PPIase family. Tig subfamily.

The protein resides in the cytoplasm. It catalyses the reaction [protein]-peptidylproline (omega=180) = [protein]-peptidylproline (omega=0). Its function is as follows. Involved in protein export. Acts as a chaperone by maintaining the newly synthesized protein in an open conformation. Functions as a peptidyl-prolyl cis-trans isomerase. This is Trigger factor from Colwellia psychrerythraea (strain 34H / ATCC BAA-681) (Vibrio psychroerythus).